Consider the following 338-residue polypeptide: Formamidase (338 aa).

The region spanning 15 to 257 (VVIGLAQLAL…DEIVCCELRP (243 aa)) is the CN hydrolase domain. Catalysis depends on Glu61, which acts as the Proton acceptor. Lys130 (proton donor) is an active-site residue. Cys163 (nucleophile) is an active-site residue.

It belongs to the carbon-nitrogen hydrolase superfamily. Aliphatic amidase family.

It catalyses the reaction formamide + H2O = formate + NH4(+). In terms of biological role, is an aliphatic amidase with a restricted substrate specificity, as it only hydrolyzes formamide. The chain is Formamidase from Pseudomonas syringae pv. tomato (strain ATCC BAA-871 / DC3000).